We begin with the raw amino-acid sequence, 108 residues long: Large ribosomal subunit protein P1B (108 aa).

Positions 72–84 (AGSASGAAAGGEA) are enriched in low complexity. The interval 72–108 (AGSASGAAAGGEAAAEEAAEEEAAEESDDDMGFGLFD) is disordered. The segment covering 85 to 102 (AAEEAAEEEAAEESDDDM) has biased composition (acidic residues).

This sequence belongs to the eukaryotic ribosomal protein P1/P2 family. As to quaternary structure, P1 and P2 exist as dimers at the large ribosomal subunit. In terms of processing, phosphorylated.

In terms of biological role, plays an important role in the elongation step of protein synthesis. This chain is Large ribosomal subunit protein P1B (RPP1B), found in Candida albicans (Yeast).